Consider the following 362-residue polypeptide: Chorismate synthase (362 aa).

Arginine 47 contacts NADP(+). Residues 124-126, glycine 286, 301-305, and arginine 327 contribute to the FMN site; these read RAS and KPTAT.

Belongs to the chorismate synthase family. As to quaternary structure, homotetramer. It depends on FMNH2 as a cofactor.

It carries out the reaction 5-O-(1-carboxyvinyl)-3-phosphoshikimate = chorismate + phosphate. Its pathway is metabolic intermediate biosynthesis; chorismate biosynthesis; chorismate from D-erythrose 4-phosphate and phosphoenolpyruvate: step 7/7. Its function is as follows. Catalyzes the anti-1,4-elimination of the C-3 phosphate and the C-6 proR hydrogen from 5-enolpyruvylshikimate-3-phosphate (EPSP) to yield chorismate, which is the branch point compound that serves as the starting substrate for the three terminal pathways of aromatic amino acid biosynthesis. This reaction introduces a second double bond into the aromatic ring system. This chain is Chorismate synthase, found in Synechococcus sp. (strain WH7803).